Consider the following 468-residue polypeptide: ATP synthase subunit beta (468 aa).

155-162 (GGAGVGKT) provides a ligand contact to ATP.

The protein belongs to the ATPase alpha/beta chains family. F-type ATPases have 2 components, CF(1) - the catalytic core - and CF(0) - the membrane proton channel. CF(1) has five subunits: alpha(3), beta(3), gamma(1), delta(1), epsilon(1). CF(0) has three main subunits: a(1), b(2) and c(9-12). The alpha and beta chains form an alternating ring which encloses part of the gamma chain. CF(1) is attached to CF(0) by a central stalk formed by the gamma and epsilon chains, while a peripheral stalk is formed by the delta and b chains.

The protein resides in the cell membrane. The catalysed reaction is ATP + H2O + 4 H(+)(in) = ADP + phosphate + 5 H(+)(out). In terms of biological role, produces ATP from ADP in the presence of a proton gradient across the membrane. The catalytic sites are hosted primarily by the beta subunits. The chain is ATP synthase subunit beta from Streptococcus suis (strain 98HAH33).